The sequence spans 510 residues: Facilitated glucose transporter protein 1 (510 aa).

The disordered stretch occupies residues 1 to 29; that stretch reads MSEKSRSDTSATASLSDSSKSPSSYSTPG. Topologically, residues 1–46 are cytoplasmic; it reads MSEKSRSDTSATASLSDSSKSPSSYSTPGTTTQKIIFPDGKLTKCL. A compositionally biased stretch (low complexity) spans 8–29; it reads DTSATASLSDSSKSPSSYSTPG. The chain crosses the membrane as a helical span at residues 47-67; it reads AFSAFVITLASFQFGYHIGCV. Residues 68–100 lie on the Extracellular side of the membrane; that stretch reads NAPGGLITEWIIGSHKDLFDKELSRENADLAWS. The helical transmembrane segment at 101 to 121 threads the bilayer; the sequence is VAVSVFAVGGMIGGLSSGWLA. Topologically, residues 122–127 are cytoplasmic; the sequence is DKVGRR. Residues 128 to 146 form a helical membrane-spanning segment; that stretch reads GALFYNNLLALAAAALMGL. At 147 to 160 the chain is on the extracellular side; that stretch reads AKSVGAYPMVILGR. The chain crosses the membrane as a helical span at residues 161–181; it reads LIIGLNCGFSSALVPMFLTEI. Residues 182 to 195 are Cytoplasmic-facing; sequence SPNNLRGMLGSLHQ. A D-glucose-binding site is contributed by Q195. A helical membrane pass occupies residues 196-216; sequence LLVTIAILVSQIFGLPHLLGT. Topologically, residues 217–219 are extracellular; it reads GDR. The helical transmembrane segment at 220-240 threads the bilayer; the sequence is WPLIFAFTVVPAVLQLALLML. The Cytoplasmic segment spans residues 241-299; the sequence is CPESPKYTMAVRGQRNEAESALKKLRDTEDVSTEIEAMQEEATAAGVQEKPKMGDMFKG. The chain crosses the membrane as a helical span at residues 300 to 320; it reads ALLWPMSIAIMMMLAQQLSGI. D-glucose is bound by residues 315 to 316, N321, and N352; that span reads QQ. At 321–341 the chain is on the extracellular side; sequence NVAMFYSTVIFRGAGLTGNEP. Residues 342–362 traverse the membrane as a helical segment; that stretch reads FYATIGMGAVNVIMTLISVWL. The Cytoplasmic segment spans residues 363–373; it reads VDHPKFGRRSL. Residues 374–394 traverse the membrane as a helical segment; the sequence is LLAGLTGMFVSTLLLVGALTI. Topologically, residues 395-409 are extracellular; sequence QNSGGDKWASYSAIG. Residues 410-430 form a helical membrane-spanning segment; the sequence is FVLLFVISFATGPGAIPWFFV. Residue W427 coordinates D-glucose. Over 431–445 the chain is Cytoplasmic; sequence SEIFDSSARGNANSI. Residues 446-464 traverse the membrane as a helical segment; the sequence is AVMVNWAANLLVGLTFLPI. The Extracellular segment spans residues 465–470; sequence NNLMQQ. Residues 471 to 491 form a helical membrane-spanning segment; that stretch reads YSFFIFSGFLAFFIFYTWKFV. Topologically, residues 492-510 are cytoplasmic; sequence PETKGKSIEQIQAEFEKRK.

Belongs to the major facilitator superfamily. Sugar transporter (TC 2.A.1.1) family. Glucose transporter subfamily. In terms of tissue distribution, isoform a is expressed in pharyngeal muscle and intestinal cells in both embryos and adults (at protein level).

Its subcellular location is the cell membrane. The protein localises to the basolateral cell membrane. Its function is as follows. Facilitative glucose transporter that plays a role in glucose metabolism and regulation of longevity. May also play a role in lipid metabolism. Glucose transport activity of isoform a is competitively inhibited by mannose, galactose and fructose, suggesting ability to transport also other hexose sugars. This is Facilitated glucose transporter protein 1 from Caenorhabditis elegans.